A 92-amino-acid polypeptide reads, in one-letter code: Acyl carrier protein AcpXL (92 aa).

The Carrier domain maps to 2–88; it reads TATFDKVADI…NLCAKIDELK (87 aa). Residue serine 37 is modified to O-(pantetheine 4'-phosphoryl)serine.

In terms of processing, 4'-phosphopantetheine is transferred from CoA to a specific serine of apo-ACP by AcpS. This modification is essential for activity because fatty acids are bound in thioester linkage to the sulfhydryl of the prosthetic group.

It localises to the cytoplasm. The protein operates within glycolipid biosynthesis; KDO(2)-lipid A biosynthesis. In terms of biological role, carrier of the growing fatty acid chain in fatty acid biosynthesis. Is involved in the transfer of long hydroxylated fatty acids to lipid A. Is acylated predominantly with 27-hydroxyoctacosanoic acid. The polypeptide is Acyl carrier protein AcpXL (acpXL) (Rhizobium etli (strain ATCC 51251 / DSM 11541 / JCM 21823 / NBRC 15573 / CFN 42)).